The sequence spans 935 residues: MLKALFGDPNTRKLNKFQSLVTETNLLEEEIKKLSDEELKRKTDEFREELEKASNDRELEEILDEILPEAFALVREASLRVLGMRHFDVQLMGGIVLHKGQIAEMKTGEGKTLVSTLPAYLNGLTGKGVHIVTVNDYLARRDAEWMGQVHRFLGLSVGLIQSGMSPEDRKKNYACDITYTTNSELGFDYLRDNMATSMAEVVQRPFNFCVIDEVDSILIDEARTPLIISGPIDRPTEKYIQASQIAKQLVKQEVEDGPGDYEVDEKARNILLTDEGYKKAEQLLGVKDLFDQDNPWAHYIFNAIKAKELFTKDVNYIVRGGEVVIVDEFTGRVLAGRRWSDGLHQAIEAKERVEIQQETQTLATITYQNFFLLYPKLSGMTGTAKTEETELEKVYNLQVTIIPTNRPSQRYDLPDAVYKAERGKWMAVAEEVEELHQKGRPILVGTTSVEKSELLSNLLRQKEIPHNLLNARPENVERESEIVAQAGRKGAVTIATNMAGRGTDIILGGNSDYMSRLKIREYLMPKLVKPEEDELAVNVPSLGGKRSRPQGFASDKKVKTWKASPDIFPTELSEETVKALKEAVKIAVDQHGQQSLGELEAEEKIAIASENAPTDDIVIQKLREVYKKIRAEYEIFTSKEHNEVVELGGLHVMGTERHESRRIDNQLRGRAGRQGDPGSTRFFLSLEDNLLKIFGGDRVARLMDALQVEEDMPIESGMLTRSLEGAQKKVETYYYDIRKQVFEYDEVMNNQRKAIYAERRRVLEGLDLKEQVLQYAEKTMDEIVEAYVNPDLPPEEWDLNTLVSKVKEFVYLLQDVAPSDIEDMTFMEMKNFLHEEVRKAYEVKEQEVDRVRPGLMRDAERFFILQQIDTLWREHLQGMESLRESIGLRGYGQKDPLIEYKQEGYEMFLEMMIDIRRNVVYSLFQFKPQGQPQAV.

Residues glutamine 90, 108 to 112, and aspartate 504 contribute to the ATP site; that span reads GEGKT.

The protein belongs to the SecA family. Monomer and homodimer. Part of the essential Sec protein translocation apparatus which comprises SecA, SecYEG and auxiliary proteins SecDF. Other proteins may also be involved.

It is found in the cell inner membrane. It localises to the cellular thylakoid membrane. The protein resides in the cytoplasm. It catalyses the reaction ATP + H2O + cellular proteinSide 1 = ADP + phosphate + cellular proteinSide 2.. Functionally, part of the Sec protein translocase complex. Interacts with the SecYEG preprotein conducting channel. Has a central role in coupling the hydrolysis of ATP to the transfer of proteins into and across the cell membrane, serving as an ATP-driven molecular motor driving the stepwise translocation of polypeptide chains across the membrane. Probably participates in protein translocation into and across both the cytoplasmic and thylakoid membranes in cyanobacterial cells. The chain is Protein translocase subunit SecA from Gloeothece citriformis (strain PCC 7424) (Cyanothece sp. (strain PCC 7424)).